Reading from the N-terminus, the 270-residue chain is Elongation factor Ts (270 aa).

Positions 77-80 are involved in Mg(2+) ion dislocation from EF-Tu; it reads TDFV.

Belongs to the EF-Ts family.

Its subcellular location is the cytoplasm. Its function is as follows. Associates with the EF-Tu.GDP complex and induces the exchange of GDP to GTP. It remains bound to the aminoacyl-tRNA.EF-Tu.GTP complex up to the GTP hydrolysis stage on the ribosome. This is Elongation factor Ts from Nocardioides sp. (strain ATCC BAA-499 / JS614).